The primary structure comprises 310 residues: Light-independent protochlorophyllide reductase iron-sulfur ATP-binding protein (310 aa).

ATP contacts are provided by residues 53–58 and lysine 82; that span reads GIGKST. Serine 57 is a binding site for Mg(2+). The [4Fe-4S] cluster site is built by cysteine 138 and cysteine 172. Residues 223 to 224 and 247 to 249 each bind ATP; these read NR and PAL.

It belongs to the NifH/BchL/ChlL family. In terms of assembly, homodimer. Protochlorophyllide reductase is composed of three subunits; BchL, BchN and BchB. It depends on [4Fe-4S] cluster as a cofactor.

The enzyme catalyses chlorophyllide a + oxidized 2[4Fe-4S]-[ferredoxin] + 2 ADP + 2 phosphate = protochlorophyllide a + reduced 2[4Fe-4S]-[ferredoxin] + 2 ATP + 2 H2O. It functions in the pathway porphyrin-containing compound metabolism; bacteriochlorophyll biosynthesis (light-independent). Its function is as follows. Component of the dark-operative protochlorophyllide reductase (DPOR) that uses Mg-ATP and reduced ferredoxin to reduce ring D of protochlorophyllide (Pchlide) to form chlorophyllide a (Chlide). This reaction is light-independent. The L component serves as a unique electron donor to the NB-component of the complex, and binds Mg-ATP. In Rhodopseudomonas palustris (strain BisA53), this protein is Light-independent protochlorophyllide reductase iron-sulfur ATP-binding protein.